Reading from the N-terminus, the 493-residue chain is Exosome complex component Rrp41 (493 aa).

Disordered regions lie at residues 244–264 (VSEETAPEKGAEKEVLEPSPV) and 291–493 (LASE…EKDE). Residues 249–259 (APEKGAEKEVL) are compositionally biased toward basic and acidic residues. The segment covering 297 to 377 (PDFEDELEEE…ALEEETELEA (81 aa)) has biased composition (acidic residues). The span at 383 to 400 (PELKEFDEIEARLEKEDA) shows a compositional bias: basic and acidic residues. Residues 401–471 (SIEAEEEIEP…EAEEEPEEEK (71 aa)) show a composition bias toward acidic residues. Positions 472–493 (SEGPWKVVKDPSEAGTRGEKDE) are enriched in basic and acidic residues.

Belongs to the RNase PH family. Rrp41 subfamily. Component of the archaeal exosome complex. Forms a hexameric ring-like arrangement composed of 3 Rrp41-Rrp42 heterodimers. The hexameric ring associates with a trimer of Rrp4 and/or Csl4 subunits.

It localises to the cytoplasm. Its function is as follows. Catalytic component of the exosome, which is a complex involved in RNA degradation. Has 3'-&gt;5' exoribonuclease activity. Can also synthesize heteromeric RNA-tails. The sequence is that of Exosome complex component Rrp41 from Methanosarcina mazei (strain ATCC BAA-159 / DSM 3647 / Goe1 / Go1 / JCM 11833 / OCM 88) (Methanosarcina frisia).